We begin with the raw amino-acid sequence, 75 residues long: Translational regulator CsrA (75 aa).

Belongs to the CsrA/RsmA family. Homodimer; the beta-strands of each monomer intercalate to form a hydrophobic core, while the alpha-helices form wings that extend away from the core.

It is found in the cytoplasm. A translational regulator that binds mRNA to regulate translation initiation and/or mRNA stability. Usually binds in the 5'-UTR at or near the Shine-Dalgarno sequence preventing ribosome-binding, thus repressing translation. Its main target seems to be the major flagellin gene, while its function is anatagonized by FliW. This Alkaliphilus metalliredigens (strain QYMF) protein is Translational regulator CsrA.